The chain runs to 334 residues: Ketol-acid reductoisomerase (NADP(+)) (334 aa).

The KARI N-terminal Rossmann domain occupies 1-181; sequence MTTVYYDQDV…GATRAGVIET (181 aa). NADP(+)-binding positions include 25–28, R48, S52, and 82–85; these read YGSQ and DEIQ. Residue H107 is part of the active site. G133 provides a ligand contact to NADP(+). The 146-residue stretch at 182–327 folds into the KARI C-terminal knotted domain; sequence TFKEETETDL…RELREMMPFI (146 aa). Mg(2+)-binding residues include D190, E194, E226, and E230. Substrate is bound at residue S251.

This sequence belongs to the ketol-acid reductoisomerase family. Requires Mg(2+) as cofactor.

The enzyme catalyses (2R)-2,3-dihydroxy-3-methylbutanoate + NADP(+) = (2S)-2-acetolactate + NADPH + H(+). The catalysed reaction is (2R,3R)-2,3-dihydroxy-3-methylpentanoate + NADP(+) = (S)-2-ethyl-2-hydroxy-3-oxobutanoate + NADPH + H(+). It participates in amino-acid biosynthesis; L-isoleucine biosynthesis; L-isoleucine from 2-oxobutanoate: step 2/4. Its pathway is amino-acid biosynthesis; L-valine biosynthesis; L-valine from pyruvate: step 2/4. Its function is as follows. Involved in the biosynthesis of branched-chain amino acids (BCAA). Catalyzes an alkyl-migration followed by a ketol-acid reduction of (S)-2-acetolactate (S2AL) to yield (R)-2,3-dihydroxy-isovalerate. In the isomerase reaction, S2AL is rearranged via a Mg-dependent methyl migration to produce 3-hydroxy-3-methyl-2-ketobutyrate (HMKB). In the reductase reaction, this 2-ketoacid undergoes a metal-dependent reduction by NADPH to yield (R)-2,3-dihydroxy-isovalerate. The chain is Ketol-acid reductoisomerase (NADP(+)) from Staphylococcus aureus (strain Mu3 / ATCC 700698).